We begin with the raw amino-acid sequence, 180 residues long: ATP synthase subunit delta (180 aa).

This sequence belongs to the ATPase delta chain family. As to quaternary structure, F-type ATPases have 2 components, F(1) - the catalytic core - and F(0) - the membrane proton channel. F(1) has five subunits: alpha(3), beta(3), gamma(1), delta(1), epsilon(1). F(0) has three main subunits: a(1), b(2) and c(10-14). The alpha and beta chains form an alternating ring which encloses part of the gamma chain. F(1) is attached to F(0) by a central stalk formed by the gamma and epsilon chains, while a peripheral stalk is formed by the delta and b chains.

The protein localises to the cell membrane. Its function is as follows. F(1)F(0) ATP synthase produces ATP from ADP in the presence of a proton or sodium gradient. F-type ATPases consist of two structural domains, F(1) containing the extramembraneous catalytic core and F(0) containing the membrane proton channel, linked together by a central stalk and a peripheral stalk. During catalysis, ATP synthesis in the catalytic domain of F(1) is coupled via a rotary mechanism of the central stalk subunits to proton translocation. This protein is part of the stalk that links CF(0) to CF(1). It either transmits conformational changes from CF(0) to CF(1) or is implicated in proton conduction. The polypeptide is ATP synthase subunit delta (Mycoplasma mobile (strain ATCC 43663 / 163K / NCTC 11711) (Mesomycoplasma mobile)).